The following is a 25-amino-acid chain: ATP synthase subunit alpha, mitochondrial (25 aa).

It belongs to the ATPase alpha/beta chains family. F-type ATPases have 2 components, CF(1) - the catalytic core - and CF(0) - the membrane proton channel. CF(1) has five subunits: alpha(3), beta(3), gamma(1), delta(1), epsilon(1). CF(0) has three main subunits: a, b and c.

The protein localises to the mitochondrion. It is found in the mitochondrion inner membrane. Its function is as follows. Mitochondrial membrane ATP synthase (F(1)F(0) ATP synthase or Complex V) produces ATP from ADP in the presence of a proton gradient across the membrane which is generated by electron transport complexes of the respiratory chain. F-type ATPases consist of two structural domains, F(1) - containing the extramembraneous catalytic core, and F(0) - containing the membrane proton channel, linked together by a central stalk and a peripheral stalk. During catalysis, ATP synthesis in the catalytic domain of F(1) is coupled via a rotary mechanism of the central stalk subunits to proton translocation. Subunits alpha and beta form the catalytic core in F(1). Rotation of the central stalk against the surrounding alpha(3)beta(3) subunits leads to hydrolysis of ATP in three separate catalytic sites on the beta subunits. Subunit alpha does not bear the catalytic high-affinity ATP-binding sites. The polypeptide is ATP synthase subunit alpha, mitochondrial (ATPA) (Spinacia oleracea (Spinach)).